Here is a 441-residue protein sequence, read N- to C-terminus: Ribosomal protein uS12 methylthiotransferase RimO (441 aa).

The MTTase N-terminal domain maps to 5-116 (PTIAFTHLGC…IVDVMQRVEK (112 aa)). Positions 14, 50, 79, 154, 158, and 161 each coordinate [4Fe-4S] cluster. Positions 140-370 (TTSEGVAYVR…EVQQSISWQQ (231 aa)) constitute a Radical SAM core domain. The TRAM domain occupies 372–438 (QKLVGQLVDV…IYDLYGCLIS (67 aa)).

This sequence belongs to the methylthiotransferase family. RimO subfamily. It depends on [4Fe-4S] cluster as a cofactor.

The protein resides in the cytoplasm. It catalyses the reaction L-aspartate(89)-[ribosomal protein uS12]-hydrogen + (sulfur carrier)-SH + AH2 + 2 S-adenosyl-L-methionine = 3-methylsulfanyl-L-aspartate(89)-[ribosomal protein uS12]-hydrogen + (sulfur carrier)-H + 5'-deoxyadenosine + L-methionine + A + S-adenosyl-L-homocysteine + 2 H(+). Catalyzes the methylthiolation of an aspartic acid residue of ribosomal protein uS12. In Trichodesmium erythraeum (strain IMS101), this protein is Ribosomal protein uS12 methylthiotransferase RimO.